The chain runs to 200 residues: IYVPAPAPAVYAPYAARAYAAPAVVAAPAAPAVRAAAVPVAAAAPAAVAAAEYDPHPQYSYGYSVNDALTGDSKSQQESRDGDVVQGSYSLVEPDGSVRTVDYTADPVNGFNAVVHKEPGVHAPIAAPVPAPAVPAGHVRTTVAAPAVAAAPVVRAAIAAPAYATYAAAPIARTAVAAPAIAAAPIARAAYAYPYAGAYF.

Tandem repeats lie at residues 20-23, 26-29, and 43-46. One can recognise a Chitin-binding type R&amp;R domain in the interval 56–127; that stretch reads HPQYSYGYSV…EPGVHAPIAA (72 aa). The segment at 70 to 89 is disordered; that stretch reads TGDSKSQQESRDGDVVQGSY. A run of 5 repeats spans residues 126-129, 144-147, 150-153, 159-162, and 177-180.

In terms of biological role, component of the cuticle of migratory locust which contains more than 100 different structural proteins. This Locusta migratoria (Migratory locust) protein is Cuticle protein 19.8.